Reading from the N-terminus, the 693-residue chain is UvrABC system protein B (693 aa).

In terms of domain architecture, Helicase ATP-binding spans 35–188 (ERINNGEKDV…DQLLRQFVGI (154 aa)). ATP is bound at residue 48 to 55 (GATGTGKS). The Beta-hairpin motif lies at 101–124 (YYDYYQPEAYVPQTDTFIEKDSSV). The region spanning 438-600 (QIDDLLGEIR…VDPTPLRKRI (163 aa)) is the Helicase C-terminal domain. A disordered region spans residues 612–634 (ADTKSLLESAGKGRSRGKAPVPV). Residues 648-683 (VDLIEQLTAQMHSAAGELQFELAARLRDEVGDLKKE) enclose the UVR domain.

This sequence belongs to the UvrB family. In terms of assembly, forms a heterotetramer with UvrA during the search for lesions. Interacts with UvrC in an incision complex.

It is found in the cytoplasm. In terms of biological role, the UvrABC repair system catalyzes the recognition and processing of DNA lesions. A damage recognition complex composed of 2 UvrA and 2 UvrB subunits scans DNA for abnormalities. Upon binding of the UvrA(2)B(2) complex to a putative damaged site, the DNA wraps around one UvrB monomer. DNA wrap is dependent on ATP binding by UvrB and probably causes local melting of the DNA helix, facilitating insertion of UvrB beta-hairpin between the DNA strands. Then UvrB probes one DNA strand for the presence of a lesion. If a lesion is found the UvrA subunits dissociate and the UvrB-DNA preincision complex is formed. This complex is subsequently bound by UvrC and the second UvrB is released. If no lesion is found, the DNA wraps around the other UvrB subunit that will check the other stand for damage. This chain is UvrABC system protein B, found in Renibacterium salmoninarum (strain ATCC 33209 / DSM 20767 / JCM 11484 / NBRC 15589 / NCIMB 2235).